Reading from the N-terminus, the 287-residue chain is Cyclopropane mycolic acid synthase MmaA2 (287 aa).

S-adenosyl-L-methionine is bound by residues 33–34 (YS), 72–74 (GCG), 94–99 (TLSKNQ), 123–124 (WE), and Ile-136. Cys-269 is an active-site residue.

The protein belongs to the CFA/CMAS family.

The catalysed reaction is a 1-acyl-2-(9Z)-enoyl-sn-glycero-3-phospholipid + S-adenosyl-L-methionine = a 1-acyl-2-(9-cyclopronane)-acyl-sn-glycero-3-phospholipid + S-adenosyl-L-homocysteine + H(+). The protein operates within lipid metabolism; mycolic acid biosynthesis. In terms of biological role, catalyzes the conversion of a double bond to a cis cyclopropane ring at the distal position of an alpha mycolic acid via the transfer of a methylene group from S-adenosyl-L-methionine. MmaA2 also catalyzes the biosynthesis of the cis-cyclopropanated methoxymycolates. Cyclopropanated mycolic acids are key factors participating in cell envelope permeability, host immunomodulation and persistence. In Mycobacterium bovis (strain ATCC BAA-935 / AF2122/97), this protein is Cyclopropane mycolic acid synthase MmaA2 (cmaC).